Reading from the N-terminus, the 112-residue chain is Tyrosine-protein phosphatase 8 (112 aa).

In terms of domain architecture, Tyrosine-protein phosphatase spans 1–112 (ENSTAIVMIT…ANSEYGPVVV (112 aa)).

It belongs to the protein-tyrosine phosphatase family.

It catalyses the reaction O-phospho-L-tyrosyl-[protein] + H2O = L-tyrosyl-[protein] + phosphate. This chain is Tyrosine-protein phosphatase 8 (STY-8), found in Styela plicata (Wrinkled sea squirt).